A 179-amino-acid polypeptide reads, in one-letter code: Large ribosomal subunit protein uL5 (179 aa).

This sequence belongs to the universal ribosomal protein uL5 family. As to quaternary structure, part of the 50S ribosomal subunit; part of the 5S rRNA/L5/L18/L25 subcomplex. Contacts the 5S rRNA and the P site tRNA. Forms a bridge to the 30S subunit in the 70S ribosome.

This is one of the proteins that bind and probably mediate the attachment of the 5S RNA into the large ribosomal subunit, where it forms part of the central protuberance. In the 70S ribosome it contacts protein S13 of the 30S subunit (bridge B1b), connecting the 2 subunits; this bridge is implicated in subunit movement. Contacts the P site tRNA; the 5S rRNA and some of its associated proteins might help stabilize positioning of ribosome-bound tRNAs. The protein is Large ribosomal subunit protein uL5 of Rickettsia peacockii (strain Rustic).